A 360-amino-acid polypeptide reads, in one-letter code: Photosystem II protein D1 (360 aa).

A run of 3 helical transmembrane segments spans residues 29 to 46 (YIGW…TATT), 118 to 133 (HFLL…QWEL), and 142 to 156 (WICV…AATA). His118 provides a ligand contact to chlorophyll a. Residue Tyr126 participates in pheophytin a binding. Residues Asp170 and Glu189 each coordinate [CaMn4O5] cluster. The chain crosses the membrane as a helical span at residues 197 to 218 (FHMLGVAGVFGGSLFSAMHGSL). His198 provides a ligand contact to chlorophyll a. Residues His215 and 264–265 (SF) each bind a quinone. His215 lines the Fe cation pocket. His272 is a Fe cation binding site. A helical transmembrane segment spans residues 274–288 (FLGAWPVIGIWFTAM). 4 residues coordinate [CaMn4O5] cluster: His332, Glu333, Asp342, and Ala344. A propeptide spanning residues 345–360 (SGEQAPVALIAPAING) is cleaved from the precursor.

The protein belongs to the reaction center PufL/M/PsbA/D family. PSII is composed of 1 copy each of membrane proteins PsbA, PsbB, PsbC, PsbD, PsbE, PsbF, PsbH, PsbI, PsbJ, PsbK, PsbL, PsbM, PsbT, PsbX, PsbY, PsbZ, Psb30/Ycf12, peripheral proteins PsbO, CyanoQ (PsbQ), PsbU, PsbV and a large number of cofactors. It forms dimeric complexes. The D1/D2 heterodimer binds P680, chlorophylls that are the primary electron donor of PSII, and subsequent electron acceptors. It shares a non-heme iron and each subunit binds pheophytin, quinone, additional chlorophylls, carotenoids and lipids. D1 provides most of the ligands for the Mn4-Ca-O5 cluster of the oxygen-evolving complex (OEC). There is also a Cl(-1) ion associated with D1 and D2, which is required for oxygen evolution. The PSII complex binds additional chlorophylls, carotenoids and specific lipids. is required as a cofactor. In terms of processing, tyr-161 forms a radical intermediate that is referred to as redox-active TyrZ, YZ or Y-Z. Post-translationally, C-terminally processed by CtpA; processing is essential to allow assembly of the oxygen-evolving complex and thus photosynthetic growth.

The protein localises to the cellular thylakoid membrane. The enzyme catalyses 2 a plastoquinone + 4 hnu + 2 H2O = 2 a plastoquinol + O2. Functionally, photosystem II (PSII) is a light-driven water:plastoquinone oxidoreductase that uses light energy to abstract electrons from H(2)O, generating O(2) and a proton gradient subsequently used for ATP formation. It consists of a core antenna complex that captures photons, and an electron transfer chain that converts photonic excitation into a charge separation. The D1/D2 (PsbA/PsbD) reaction center heterodimer binds P680, the primary electron donor of PSII as well as several subsequent electron acceptors. The protein is Photosystem II protein D1 of Microcystis aeruginosa (strain NIES-843 / IAM M-2473).